The sequence spans 559 residues: Complement component receptor 1-like protein (559 aa).

The signal sequence occupies residues 1 to 35; the sequence is MEASSPLDPVGRLVAFCRGGVHLAVLLLFLSPSTL. 7 Sushi domains span residues 36–96, 97–158, 159–229, 231–290, 292–354, 355–415, and 417–477; these read GQCP…VCIR, KQCE…ICES, IPCE…QCIE, NKCT…SCFK, KSCG…VCEQ, and VICK…KCVS. The Extracellular segment spans residues 36–482; sequence GQCPAPPLFP…PKCVSRSNSG (447 aa). Disulfide bonds link C38-C81, C68-C94, C99-C140, C126-C156, C161-C210, C190-C227, C233-C275, C261-C288, C294-C336, C322-C352, C357-C400, C386-C413, C419-C462, and C448-C475. The O-linked (GalNAc...) threonine glycan is linked to T53. An N-linked (GlcNAc...) asparagine glycan is attached at N331. A helical transmembrane segment spans residues 483–503; the sequence is LIAGIFIGIIVLILFIIFSYW. Over 504–559 the chain is Cytoplasmic; that stretch reads MIMKFKKRNSTNEKCKEVGIYLNSKEDSCVQPQSLLTSQENNSTSSPARNSLTQEV. S527, S531, and S537 each carry phosphoserine. The segment at 535-559 is disordered; that stretch reads PQSLLTSQENNSTSSPARNSLTQEV. Residue T540 is modified to Phosphothreonine. The residue at position 554 (S554) is a Phosphoserine.

The protein belongs to the receptors of complement activation (RCA) family. Interacts with C3b.

The protein resides in the membrane. In terms of biological role, acts as a cofactor for complement factor I, a serine protease which protects autologous cells against complement-mediated injury by cleaving C3b and C4b deposited on host tissue. Also acts as a decay-accelerating factor, preventing the formation of C4b2a and C3bBb, the amplification convertases of the complement cascade. Seems to act as a costimulatory factor for T-cells. May play a crucial role in early embryonic development by maintaining fetomaternal tolerance. In Rattus norvegicus (Rat), this protein is Complement component receptor 1-like protein (Cr1l).